A 631-amino-acid polypeptide reads, in one-letter code: MTIRILPPQLANQIAAGEVVERPASVIKELVENSLDAGATRVDIEIDKGGSKLIKITDNGSGIPKEELSLALSRHATSKLASLDDLDAILSFGFRGEALASISSVSRLTLTSRTQEQSEAWQAYAEGSEMAVRVIPAAHPVGSTVEAADLFFNTPARRRFLKSDKTEFTHIDEWLKRIALVRSEIHFTLKHNGKQVRNYRPAKTEAQYLQRLAQVSGKAFADNALRVDCNHNGLSLSGYIQSPFSEMAVGDTQYFYVNGRLVRDRLVNHAVRQAFAQQLQGEQVAFVLMLNLDPHQVDVNVHPAKHEVRFHESRYVHDFILQALESALRQSSELAFEAALDTQVTDQNRSASYIRPLQTQQSDTGSNQIAHGDTEENALWLANERPAYGEREASRQAGGQRVQETQMSSYGSGQSGGRGRSYASTELPSQAAVDSYAQLMTTPGVSSQANQADDSHLPPMPQVLDGQYWLLVRGSELALLSLSCAAREVTRREIEAKLDAGLIGQPLLMPVSVKVDEDWQQTLVERELLVRKLGLELTIRLGQLIIKKVPPYLRQSQLASVIPEFLQWIRFEEPTTEALVNWLVNQSGEQFNSASRLWAGLMGLPESQQQEILSLAKVMPWQTWLGEQTSE.

The interval G389–A423 is disordered.

It belongs to the DNA mismatch repair MutL/HexB family.

Functionally, this protein is involved in the repair of mismatches in DNA. It is required for dam-dependent methyl-directed DNA mismatch repair. May act as a 'molecular matchmaker', a protein that promotes the formation of a stable complex between two or more DNA-binding proteins in an ATP-dependent manner without itself being part of a final effector complex. The sequence is that of DNA mismatch repair protein MutL from Shewanella loihica (strain ATCC BAA-1088 / PV-4).